The following is a 74-amino-acid chain: Small cysteine-rich protein 8 (74 aa).

An N-terminal signal peptide occupies residues Met1–Gly21. A propeptide spanning residues Ala22 to Phe31 is cleaved from the precursor.

This sequence belongs to the Cnidaria small cysteine-rich protein (SCRiP) family. beta subfamily. In terms of processing, contains 4 disulfide bonds.

The protein resides in the secreted. Its subcellular location is the nematocyst. Induces neurotoxic symptoms on zebrafish. Has also been claimed to be implied in calcification, but tests on homolog proteins suggest that proteins of this family have a neurotoxic function and not a calcification function. The sequence is that of Small cysteine-rich protein 8 from Orbicella faveolata (Mountainous star coral).